We begin with the raw amino-acid sequence, 277 residues long: Intercellular adhesion molecule 2 (277 aa).

Positions 1–22 are cleaved as a signal peptide; the sequence is MSSFACWSLSLLILFYSPGSGE. The Extracellular segment spans residues 23-222; sequence KAFEVYIWSE…EVYEPMQDNQ (200 aa). 2 Ig-like C2-type domains span residues 39-98 and 127-196; these read TESW…CSGK and GEDF…LDLR. Residues asparagine 45, asparagine 82, asparagine 158, asparagine 176, and asparagine 186 are each glycosylated (N-linked (GlcNAc...) asparagine). 3 disulfide bridges follow: cysteine 46–cysteine 91, cysteine 50–cysteine 95, and cysteine 134–cysteine 189. The chain crosses the membrane as a helical span at residues 223 to 247; it reads MVIIIVVVSILLFLFVTSVLLCFIF. Topologically, residues 248–277 are cytoplasmic; sequence GQHWHRRRTGTYGVLAAWRRLPRAFRARPV. Residues 250–277 form a required for interaction with EZR, MSN and RDX and co-localization to microvilli region; sequence HWHRRRTGTYGVLAAWRRLPRAFRARPV.

It belongs to the immunoglobulin superfamily. ICAM family. Interacts with RDX, EZR and MSN. Expressed in endothelial cells and leukocytes. High levels found in lung.

The protein resides in the membrane. It localises to the cell projection. It is found in the microvillus. ICAM proteins are ligands for the leukocyte adhesion protein LFA-1 (integrin alpha-L/beta-2). ICAM2 may play a role in lymphocyte recirculation by blocking LFA-1-dependent cell adhesion. It mediates adhesive interactions important for antigen-specific immune response, NK-cell mediated clearance, lymphocyte recirculation, and other cellular interactions important for immune response and surveillance. The protein is Intercellular adhesion molecule 2 (Icam2) of Mus musculus (Mouse).